A 374-amino-acid chain; its full sequence is DNA replication and repair protein RecF (374 aa).

An ATP-binding site is contributed by 30–37; sequence GENAQGKT.

It belongs to the RecF family.

Its subcellular location is the cytoplasm. Its function is as follows. The RecF protein is involved in DNA metabolism; it is required for DNA replication and normal SOS inducibility. RecF binds preferentially to single-stranded, linear DNA. It also seems to bind ATP. In Lactiplantibacillus plantarum (strain ATCC BAA-793 / NCIMB 8826 / WCFS1) (Lactobacillus plantarum), this protein is DNA replication and repair protein RecF.